A 578-amino-acid chain; its full sequence is Isocitrate dehydrogenase kinase/phosphatase (578 aa).

Residues 315–321 (APGIRGM) and lysine 336 contribute to the ATP site. Aspartate 371 is an active-site residue.

The protein belongs to the AceK family.

The protein localises to the cytoplasm. It carries out the reaction L-seryl-[isocitrate dehydrogenase] + ATP = O-phospho-L-seryl-[isocitrate dehydrogenase] + ADP + H(+). Bifunctional enzyme which can phosphorylate or dephosphorylate isocitrate dehydrogenase (IDH) on a specific serine residue. This is a regulatory mechanism which enables bacteria to bypass the Krebs cycle via the glyoxylate shunt in response to the source of carbon. When bacteria are grown on glucose, IDH is fully active and unphosphorylated, but when grown on acetate or ethanol, the activity of IDH declines drastically concomitant with its phosphorylation. In Escherichia coli O157:H7, this protein is Isocitrate dehydrogenase kinase/phosphatase.